A 197-amino-acid polypeptide reads, in one-letter code: SIGLEC family-like protein 1 (197 aa).

A helical transmembrane segment spans residues 118-138 (GAIYAGIVIALLFLCLLPLIV). The interval 160-179 (VRASQELEMSLKPEEPGKPV) is disordered. Basic and acidic residues predominate over residues 162–176 (ASQELEMSLKPEEPG).

It is found in the membrane. This Homo sapiens (Human) protein is SIGLEC family-like protein 1 (SIGLECL1).